A 213-amino-acid polypeptide reads, in one-letter code: Redox-sensing transcriptional repressor Rex (213 aa).

Residues 18–57 constitute a DNA-binding region (H-T-H motif); sequence LYYRFLKNLHASGKQRVSSAELSEAVKVDPATIRRDFSYF. 92–97 contributes to the NAD(+) binding site; that stretch reads GVGNLG.

It belongs to the transcriptional regulatory Rex family. As to quaternary structure, homodimer.

It localises to the cytoplasm. In terms of biological role, modulates transcription in response to changes in cellular NADH/NAD(+) redox state. This is Redox-sensing transcriptional repressor Rex from Geobacillus kaustophilus (strain HTA426).